The sequence spans 993 residues: Lateral signaling target protein 2 homolog (993 aa).

Disordered regions lie at residues 340–449 (DQRN…DTTD), 494–623 (DGYG…TVVQ), 759–813 (GARH…GDQE), and 825–902 (AVNE…PPAW). The span at 343-360 (NNNNNINNNSSSSSNSNS) shows a compositional bias: low complexity. The span at 372 to 405 (RSPSMLSLSTASPTPSHSIGSTFSAATSSTNPPV) shows a compositional bias: polar residues. Over residues 409–448 (DGDDADDDDDGDDDDEDDDDDVDDDLVGNDDSDDDDDDTT) the composition is skewed to acidic residues. Phosphoserine is present on residues serine 525 and serine 526. Polar residues predominate over residues 535-549 (SHNNTTTIKSPDSDG). Over residues 559-608 (SRQRHSHHHHRHHHHHHRHSSHSSHSHHHQHQQHHSQPHPHRTTRSGRKR) the composition is skewed to basic residues. A compositionally biased stretch (low complexity) spans 759 to 801 (GARHSAGASMQRNHTTIDNNNSTSSSPPDATITTTTTTTTTRS). Serine 808 carries the phosphoserine modification. Low complexity-rich tracts occupy residues 842-862 (SNTPSSASSSATSSSSEQNSP) and 884-896 (TTATTTTTTGTGT). The segment at 905-965 (DGKAPRCMSC…VCRDCYAREI (61 aa)) adopts an FYVE-type zinc-finger fold. Positions 911, 914, 927, 930, 935, 938, 957, and 960 each coordinate Zn(2+). Positions 968-993 (SGGGGGGVVQMQRQQAANRPQTASAS) are disordered. Over residues 978–993 (MQRQQAANRPQTASAS) the composition is skewed to polar residues.

This sequence belongs to the lst-2 family.

Functionally, negative regulator of epidermal growth factor receptor (EGFR) signaling. This Drosophila willistoni (Fruit fly) protein is Lateral signaling target protein 2 homolog.